The chain runs to 485 residues: Fumarate hydratase, mitochondrial (485 aa).

The N-terminal 19 residues, 1 to 19, are a transit peptide targeting the mitochondrion; that stretch reads MLSASRKLNNQQFLKTIRN. Residues 118-120, 150-153, 160-162, and Thr-208 each bind substrate; these read SGT, HPND, and SSN. His-209 functions as the Proton donor/acceptor in the catalytic mechanism. Ser-339 is an active-site residue. Substrate contacts are provided by residues Ser-340 and 345-347; that span reads KVN.

It belongs to the class-II fumarase/aspartase family. Fumarase subfamily. In terms of assembly, homotetramer.

It is found in the mitochondrion. The protein resides in the cytoplasm. It catalyses the reaction (S)-malate = fumarate + H2O. Its pathway is carbohydrate metabolism; tricarboxylic acid cycle; (S)-malate from fumarate: step 1/1. In terms of biological role, catalyzes the reversible stereospecific interconversion of fumarate to L-malate. Its function is as follows. Catalyzes the hydration of fumarate to L-malate in the tricarboxylic acid (TCA) cycle to facilitate a transition step in the production of energy in the form of NADH. In Dictyostelium discoideum (Social amoeba), this protein is Fumarate hydratase, mitochondrial.